Reading from the N-terminus, the 321-residue chain is MNLYGLVADIGGTNARLALCNLENGVIERIETYSAKQHAGLESIISHYLAEQKTVVTYACIAIACPINGDWVEMTNHQWAFSISELKRTLGLEKLDVINDFTAVSMAIPMLTEEYKLQLGGGEAVKDKPIAVYGAGTGLGVAHLIKVDKQWVSLPGEGGHVDFAANSEEQDAILAVLRRKFGHVSVERILSGSGLVNLYQAIAILDHRQPEDLEPETVTQRALDKSCQYCHRALTLFCEIMGRFGGNLALNMGTFGGVYIAGGIVPRFLDFFRQSNFLHGFEDKGRFKPLVQQIPVYLITHPQPGLLGSGTYLRQQLSLID.

8–13 (ADIGGT) is a binding site for ATP.

It belongs to the bacterial glucokinase family.

Its subcellular location is the cytoplasm. It carries out the reaction D-glucose + ATP = D-glucose 6-phosphate + ADP + H(+). This is Glucokinase from Photorhabdus laumondii subsp. laumondii (strain DSM 15139 / CIP 105565 / TT01) (Photorhabdus luminescens subsp. laumondii).